The sequence spans 263 residues: Small ribosomal subunit protein uS2 (263 aa).

Belongs to the universal ribosomal protein uS2 family.

This Hyphomonas neptunium (strain ATCC 15444) protein is Small ribosomal subunit protein uS2.